The chain runs to 359 residues: DNA polymerase IV (359 aa).

Residues 4–185 (IIHVDMDCFF…LALIKIPGVG (182 aa)) enclose the UmuC domain. 2 residues coordinate Mg(2+): Asp8 and Asp103. Glu104 is a catalytic residue.

It belongs to the DNA polymerase type-Y family. As to quaternary structure, monomer. Mg(2+) serves as cofactor.

It is found in the cytoplasm. The enzyme catalyses DNA(n) + a 2'-deoxyribonucleoside 5'-triphosphate = DNA(n+1) + diphosphate. Its function is as follows. Poorly processive, error-prone DNA polymerase involved in untargeted mutagenesis. Copies undamaged DNA at stalled replication forks, which arise in vivo from mismatched or misaligned primer ends. These misaligned primers can be extended by PolIV. Exhibits no 3'-5' exonuclease (proofreading) activity. May be involved in translesional synthesis, in conjunction with the beta clamp from PolIII. In Shewanella loihica (strain ATCC BAA-1088 / PV-4), this protein is DNA polymerase IV.